We begin with the raw amino-acid sequence, 214 residues long: Ribosomal RNA small subunit methyltransferase G (214 aa).

Residues G73, L78, 124–125, and R139 contribute to the S-adenosyl-L-methionine site; that span reads VE.

It belongs to the methyltransferase superfamily. RNA methyltransferase RsmG family.

The protein resides in the cytoplasm. It catalyses the reaction guanosine(527) in 16S rRNA + S-adenosyl-L-methionine = N(7)-methylguanosine(527) in 16S rRNA + S-adenosyl-L-homocysteine. Its function is as follows. Specifically methylates the N7 position of guanine in position 527 of 16S rRNA. The protein is Ribosomal RNA small subunit methyltransferase G of Aeromonas hydrophila subsp. hydrophila (strain ATCC 7966 / DSM 30187 / BCRC 13018 / CCUG 14551 / JCM 1027 / KCTC 2358 / NCIMB 9240 / NCTC 8049).